The sequence spans 513 residues: Putative ADP-ribosyl glycohydrolase L444 (513 aa).

The segment covering 1-23 (MSDKIQSRESKTTKPTKTEKISD) has biased composition (basic and acidic residues). The disordered stretch occupies residues 1–33 (MSDKIQSRESKTTKPTKTEKISDKSGNLSQVKS). Residues 24–33 (KSGNLSQVKS) show a composition bias toward polar residues.

Belongs to the ADP-ribosylglycohydrolase family.

In Acanthamoeba polyphaga mimivirus (APMV), this protein is Putative ADP-ribosyl glycohydrolase L444.